Here is a 174-residue protein sequence, read N- to C-terminus: NADH-quinone oxidoreductase subunit B (174 aa).

The [4Fe-4S] cluster site is built by Cys-51, Cys-52, Cys-116, and Cys-146.

This sequence belongs to the complex I 20 kDa subunit family. In terms of assembly, NDH-1 is composed of 14 different subunits. Subunits NuoB, C, D, E, F, and G constitute the peripheral sector of the complex. Requires [4Fe-4S] cluster as cofactor.

Its subcellular location is the cell inner membrane. It catalyses the reaction a quinone + NADH + 5 H(+)(in) = a quinol + NAD(+) + 4 H(+)(out). NDH-1 shuttles electrons from NADH, via FMN and iron-sulfur (Fe-S) centers, to quinones in the respiratory chain. The immediate electron acceptor for the enzyme in this species is believed to be ubiquinone. Couples the redox reaction to proton translocation (for every two electrons transferred, four hydrogen ions are translocated across the cytoplasmic membrane), and thus conserves the redox energy in a proton gradient. The sequence is that of NADH-quinone oxidoreductase subunit B from Anaplasma phagocytophilum (strain HZ).